Reading from the N-terminus, the 243-residue chain is NAD-dependent protein deacetylase (243 aa).

Positions 1 to 243 (MKHDLETLKH…VSVVKSLMTE (243 aa)) constitute a Deacetylase sirtuin-type domain. Alanine 24, phenylalanine 35, arginine 36, glutamine 105, isoleucine 107, aspartate 108, and histidine 123 together coordinate NAD(+). Phenylalanine 35 lines the nicotinamide pocket. Residues isoleucine 107 and aspartate 108 each contribute to the nicotinamide site. Catalysis depends on histidine 123, which acts as the Proton acceptor. Residues cysteine 131, cysteine 134, cysteine 151, and cysteine 154 each coordinate Zn(2+). NAD(+) contacts are provided by serine 192, serine 193, asparagine 215, and aspartate 232.

The protein belongs to the sirtuin family. Class U subfamily. Requires Zn(2+) as cofactor.

The protein resides in the cytoplasm. The enzyme catalyses N(6)-acetyl-L-lysyl-[protein] + NAD(+) + H2O = 2''-O-acetyl-ADP-D-ribose + nicotinamide + L-lysyl-[protein]. NAD-dependent protein deacetylase which modulates the activities of several enzymes which are inactive in their acetylated form. In Staphylococcus aureus (strain MRSA252), this protein is NAD-dependent protein deacetylase.